A 115-amino-acid polypeptide reads, in one-letter code: Probable 4-amino-4-deoxy-L-arabinose-phosphoundecaprenol flippase subunit ArnE (115 aa).

The next 4 membrane-spanning stretches (helical) occupy residues 1 to 21, 43 to 63, 65 to 85, and 93 to 113; these read MIVG…GQLC, WLAL…NVLQ, LPLS…TLAA, and TTAR…LMSI. The region spanning 44-113 is the EamA domain; sequence LALAVLLLGL…IMLGILLMSI (70 aa).

The protein belongs to the ArnE family. As to quaternary structure, heterodimer of ArnE and ArnF.

Its subcellular location is the cell inner membrane. It functions in the pathway bacterial outer membrane biogenesis; lipopolysaccharide biosynthesis. Its function is as follows. Translocates 4-amino-4-deoxy-L-arabinose-phosphoundecaprenol (alpha-L-Ara4N-phosphoundecaprenol) from the cytoplasmic to the periplasmic side of the inner membrane. This is Probable 4-amino-4-deoxy-L-arabinose-phosphoundecaprenol flippase subunit ArnE from Serratia proteamaculans (strain 568).